A 500-amino-acid polypeptide reads, in one-letter code: uncharacterized protein (500 aa).

Low complexity predominate over residues 1 to 13 (MEPSQRSGSFSSI). The tract at residues 1–23 (MEPSQRSGSFSSISRRRSRVDSR) is disordered. Position 9 is a phosphoserine (Ser9). The next 12 helical transmembrane spans lie at 87-107 (VSIA…AVAL), 126-146 (LVIG…LCFA), 156-176 (LYFR…LLYC), 183-203 (WIYL…TFLY), 225-245 (MNIL…GILA), 261-281 (VASW…IFFF), 312-332 (FLLF…NGYQ), 351-371 (GNFI…SSFL), 380-400 (IMLG…VLDA), 408-428 (VYFF…APLI), 445-465 (IVVQ…GGAI), and 471-491 (VGFI…LIFM).

The protein belongs to the major facilitator superfamily.

The protein localises to the golgi apparatus. It localises to the membrane. This is an uncharacterized protein from Schizosaccharomyces pombe (strain 972 / ATCC 24843) (Fission yeast).